Here is a 1205-residue protein sequence, read N- to C-terminus: MGDQQLYKTNHVGHGGENLFYQQPPLGVHSGLGHSYGNTISGAGMDAPQASPISPHFPQDTRDGLGLPIGSKNLGQMDTSRQGGWGSHAGPGNHVQLRSNLANSNMMWGTPTQVEPADGYQYTYSQASEIRTQKLTSGVLHKLDSFTQVFANQNLRIQVNNMAQVLHTQSAVMDGASDSALRQLLSQKPVEPSASAIASRYQQVPQQPHPGFTGGLPKPALPVGQHAPQGHLYYDYQQPLAQMSMQGGQPLQAPQVLSGHMQQLQQHQYYPQPPPQQQQAGLQRISVQEMQQQQQPQQIRPSPPQQQQQLQLQQRQSSLQIPQYYQPQPMMQHLQEQQQPSMHLQPPSYHRDPHQYTPEQAHAVQLIQLGSMPQYYYQEPQQAYSHPLYPQSHLSQHQQREDGQLKTYSSDRQTPAMLSSHGDMGTSDTGVADPASSEMTRVTSTLPHQPLLSPSGIHLNNMGSQHQQPPSPSAMWPQMHLPDGRAQSGSPESSSGQTKGVFGEQFDAKNKLTCSICLKEFKSLPALNGHMRSHGGMRASPSLKQEEGEKAPPPQPQPQPQPQQPLPPPPPPPPPPQLPPEAERLTPMVMPVSVPVKLIPPKPSSQGFTNSVAATPAARDKPASSMSDDEMPVLEIPRKHPPIAAKVEEPLKNLPEKKKFRHRPEPLFIPPPPSSYTPNPTSYSGATLYQSQLRSPRILGDHLLLDPAHELPPYTPPPMLSPVRQGSGLFSNVLISGHGPGVHPQLPLTPLTPTPRVLLCRSSSIDGSNVTVTPGPGEQTVDVEPRINIGLRFQAEIPELQDVSALAQDTHRATLVWKPWPELENQALQQQVENLLNLCCSSALPGGGTNSEFALHSLFEAKGDVMATLEMLLLRKPVRLKCHPLANYHYAGSDKWTSLERKLFNKALATYSKDFIFVQKMVKSKTVAQCVEYYYTWKKIMRLGRKHRTRLAEIIDDCMTSEEEEEAEEEEEDPEEDRKSIKEEESEVAKSPEPPPAPALAPTEGPPMQAVGQQPSGNFICEMPNCGAVFSSRQALNGHARIHGGTNQVAKTRGAIPSGKQKPGGTQSGYCSVKSSPSHSTTSGETDPTTIFPCKECGKVFFKIKSRNAHMKTHRQQEEQQRQKAQKAAFAAEMAATIERTTGPVGAPELLPLDQLSLMKPVKDVDILDDDVVQQLGVMDEAEVVGTDLLLDDQDSVLLQGDTEL.

6 disordered regions span residues 201 to 226 (YQQVPQQPHPGFTGGLPKPALPVGQH), 270 to 317 (YPQP…QRQS), 332 to 351 (QHLQEQQQPSMHLQPPSYHR), 390 to 500 (PQSH…QTKG), 527 to 583 (LNGH…PEAE), and 601 to 629 (PKPSSQGFTNSVAATPAARDKPASSMSDD). Low complexity-rich tracts occupy residues 291 to 317 (QQQQQPQQIRPSPPQQQQQLQLQQRQS) and 332 to 342 (QHLQEQQQPSM). 3 stretches are compositionally biased toward polar residues: residues 406-417 (KTYSSDRQTPAM), 437-447 (SEMTRVTSTLP), and 487-498 (QSGSPESSSGQT). At S490 the chain carries Phosphoserine. Residues 512 to 534 (LTCSICLKEFKSLPALNGHMRSH) form a C2H2-type 1 zinc finger. The span at 551–579 (APPPQPQPQPQPQQPLPPPPPPPPPPQLP) shows a compositional bias: pro residues. The span at 604 to 613 (SSQGFTNSVA) shows a compositional bias: polar residues. An N6-acetyllysine mark is found at K639 and K646. T773 carries the post-translational modification Phosphothreonine. Residues 785–876 (PRINIGLRFQ…ATLEMLLLRK (92 aa)) form the ELM2 domain. One can recognise an SANT domain in the interval 891 to 942 (AGSDKWTSLERKLFNKALATYSKDFIFVQKMVKSKTVAQCVEYYYTWKKIMR). Acidic residues predominate over residues 956–975 (DDCMTSEEEEEAEEEEEDPE). Disordered regions lie at residues 956 to 1016 (DDCM…QQPS) and 1043 to 1087 (HGGT…GETD). Phosphothreonine is present on T960. The residue at position 961 (S961) is a Phosphoserine. The segment covering 976-990 (EDRKSIKEEESEVAK) has biased composition (basic and acidic residues). The segment at 1019-1043 (FICEMPNCGAVFSSRQALNGHARIH) adopts a C2H2-type 2 zinc-finger fold. The segment covering 1072-1086 (SVKSSPSHSTTSGET) has biased composition (low complexity). The C2H2-type 3 zinc finger occupies 1092 to 1114 (FPCKECGKVFFKIKSRNAHMKTH).

Interacts with CREBBP and EP300. Interacts with DNTTIP1 and DNTT. In terms of tissue distribution, highly expressed in kidney, lung and brain. In the brain, expression was seen in the basal ganglia, hippocampus, piriform cortex, cerebral cortex, ventromedial nucleus of the hypothalamus and the dorsal and superior central nuclei of the raphe.

It is found in the nucleus. Binds DNA and activates transcription of CYP11A1. Interaction with CREBBP and EP300 results in a synergistic transcriptional activation of CYP11A1. In Mus musculus (Mouse), this protein is Transcriptional-regulating factor 1 (Trerf1).